The primary structure comprises 302 residues: D-alanine--D-alanine ligase (302 aa).

In terms of domain architecture, ATP-grasp spans Lys-104 to Glu-296. Position 130 to 183 (Ala-130 to Thr-183) interacts with ATP. Mg(2+)-binding residues include Asp-251, Glu-263, and Asn-265.

It belongs to the D-alanine--D-alanine ligase family. Mg(2+) is required as a cofactor. The cofactor is Mn(2+).

It localises to the cytoplasm. The enzyme catalyses 2 D-alanine + ATP = D-alanyl-D-alanine + ADP + phosphate + H(+). The protein operates within cell wall biogenesis; peptidoglycan biosynthesis. Its function is as follows. Cell wall formation. In Rhodospirillum rubrum (strain ATCC 11170 / ATH 1.1.1 / DSM 467 / LMG 4362 / NCIMB 8255 / S1), this protein is D-alanine--D-alanine ligase.